Reading from the N-terminus, the 369-residue chain is Putative glutamate--cysteine ligase 2-1 (369 aa).

The protein belongs to the glutamate--cysteine ligase type 2 family. YbdK subfamily.

The enzyme catalyses L-cysteine + L-glutamate + ATP = gamma-L-glutamyl-L-cysteine + ADP + phosphate + H(+). Functionally, ATP-dependent carboxylate-amine ligase which exhibits weak glutamate--cysteine ligase activity. This Rhodococcus jostii (strain RHA1) protein is Putative glutamate--cysteine ligase 2-1.